Here is a 756-residue protein sequence, read N- to C-terminus: Probable chemoreceptor y4sI (756 aa).

The next 2 membrane-spanning stretches (helical) occupy residues 26–46 and 330–350; these read VCVA…TSVA and LIKI…MAIL. HAMP domains follow at residues 353–406 and 434–486; these read RSIS…ARVA and DEQA…ETIR. The region spanning 491–720 is the Methyl-accepting transducer domain; the sequence is QAASMSSIVS…ESDAACRSLN (230 aa). Residues 736-756 form a disordered region; it reads GGGSSTRQPQSPPTQRYFMSR.

Belongs to the methyl-accepting chemotaxis (MCP) protein family.

It localises to the cell membrane. Functionally, chemotactic-signal transducers respond to changes in the concentration of attractants and repellents in the environment, transduce a signal from the outside to the inside of the cell, and facilitate sensory adaptation through the variation of the level of methylation. Attractants increase the level of methylation while repellents decrease the level of methylation. This chain is Probable chemoreceptor y4sI, found in Sinorhizobium fredii (strain NBRC 101917 / NGR234).